A 93-amino-acid chain; its full sequence is DNA/RNA-binding protein Alba (93 aa).

An N6-acetyllysine modification is found at K11.

This sequence belongs to the histone-like Alba family. Post-translationally, acetylated. Acetylation at Lys-11 decreases DNA-binding affinity.

It is found in the cytoplasm. The protein localises to the chromosome. In terms of biological role, binds double-stranded DNA tightly but without sequence specificity. Involved in DNA compaction. The chain is DNA/RNA-binding protein Alba from Pyrococcus horikoshii (strain ATCC 700860 / DSM 12428 / JCM 9974 / NBRC 100139 / OT-3).